A 183-amino-acid chain; its full sequence is Probable RNA 2'-phosphotransferase (183 aa).

Belongs to the KptA/TPT1 family.

Its function is as follows. Removes the 2'-phosphate from RNA via an intermediate in which the phosphate is ADP-ribosylated by NAD followed by a presumed transesterification to release the RNA and generate ADP-ribose 1''-2''-cyclic phosphate (APPR&gt;P). May function as an ADP-ribosylase. The chain is Probable RNA 2'-phosphotransferase from Pyrococcus furiosus (strain ATCC 43587 / DSM 3638 / JCM 8422 / Vc1).